We begin with the raw amino-acid sequence, 214 residues long: Probable transaldolase (214 aa).

Lys83 (schiff-base intermediate with substrate) is an active-site residue.

The protein belongs to the transaldolase family. Type 3B subfamily.

Its subcellular location is the cytoplasm. It carries out the reaction D-sedoheptulose 7-phosphate + D-glyceraldehyde 3-phosphate = D-erythrose 4-phosphate + beta-D-fructose 6-phosphate. The protein operates within carbohydrate degradation; pentose phosphate pathway; D-glyceraldehyde 3-phosphate and beta-D-fructose 6-phosphate from D-ribose 5-phosphate and D-xylulose 5-phosphate (non-oxidative stage): step 2/3. In terms of biological role, transaldolase is important for the balance of metabolites in the pentose-phosphate pathway. This Citrifermentans bemidjiense (strain ATCC BAA-1014 / DSM 16622 / JCM 12645 / Bem) (Geobacter bemidjiensis) protein is Probable transaldolase.